A 121-amino-acid chain; its full sequence is Small ribosomal subunit protein uS13 (121 aa).

The interval 93-121 is disordered; it reads RGLPVRGQNSKNNARTRKGPRRTVANKKK. Residues 106–121 show a composition bias toward basic residues; sequence ARTRKGPRRTVANKKK.

This sequence belongs to the universal ribosomal protein uS13 family. In terms of assembly, part of the 30S ribosomal subunit. Forms a loose heterodimer with protein S19. Forms two bridges to the 50S subunit in the 70S ribosome.

Functionally, located at the top of the head of the 30S subunit, it contacts several helices of the 16S rRNA. In the 70S ribosome it contacts the 23S rRNA (bridge B1a) and protein L5 of the 50S subunit (bridge B1b), connecting the 2 subunits; these bridges are implicated in subunit movement. Contacts the tRNAs in the A and P-sites. In Bacillus subtilis (strain 168), this protein is Small ribosomal subunit protein uS13.